The sequence spans 621 residues: 1-deoxy-D-xylulose-5-phosphate synthase (621 aa).

Thiamine diphosphate is bound by residues H80 and 121–123 (GHS). D152 serves as a coordination point for Mg(2+). Thiamine diphosphate is bound by residues 153–154 (GA), N181, Y288, and E370. Residue N181 participates in Mg(2+) binding.

It belongs to the transketolase family. DXPS subfamily. Homodimer. It depends on Mg(2+) as a cofactor. The cofactor is thiamine diphosphate.

It carries out the reaction D-glyceraldehyde 3-phosphate + pyruvate + H(+) = 1-deoxy-D-xylulose 5-phosphate + CO2. It functions in the pathway metabolic intermediate biosynthesis; 1-deoxy-D-xylulose 5-phosphate biosynthesis; 1-deoxy-D-xylulose 5-phosphate from D-glyceraldehyde 3-phosphate and pyruvate: step 1/1. Functionally, catalyzes the acyloin condensation reaction between C atoms 2 and 3 of pyruvate and glyceraldehyde 3-phosphate to yield 1-deoxy-D-xylulose-5-phosphate (DXP). The chain is 1-deoxy-D-xylulose-5-phosphate synthase from Aeromonas hydrophila subsp. hydrophila (strain ATCC 7966 / DSM 30187 / BCRC 13018 / CCUG 14551 / JCM 1027 / KCTC 2358 / NCIMB 9240 / NCTC 8049).